A 243-amino-acid polypeptide reads, in one-letter code: CR(VI) reductase (243 aa).

It belongs to the flavin oxidoreductase frp family. FMN is required as a cofactor.

The chain is CR(VI) reductase (chrR) from Pseudomonas sp. (strain G-1).